The chain runs to 434 residues: MPIITDVYAREVLDSRGNPTVEVEVLTESGAFGRALVPSGASTGEHEAVELRDGDKSRYSGKGVTKAVENVNEIIAPEIVEGEFSVLDQVSIDKMMIQLDGTPNKGKLGANAILGVSIAVARAAADLLGQPLYKYLGGFNGKQLPVPMMNIVNGGSHSDAPIAFQEFMILPTGAESFKEALRWGAEIFHNLKSILSERGLETAVGDEGGFAPKFEGTEDAVETIIKAIEKAGYKPGEDVFLGFDCASSEFYENGVYDYTKFEGEHGAKRSAAEQVDYLEELIGKYPIITIEDGMDENDWDGWKQLTDRIGDKVQLVGDDLFVTNTEILSRGIEQGIGNSILIKVNQIGTLTETFEAIEMAQKAGYTAVVSHRSGETEDTTISDIAVATNAGQIKTGSLSRTDRIAKYNQLLRIEDELFETAKFDGIKSFYNLDK.

Glutamine 165 lines the (2R)-2-phosphoglycerate pocket. Glutamate 207 acts as the Proton donor in catalysis. Mg(2+) is bound by residues aspartate 244, glutamate 291, and aspartate 318. Positions 343, 372, 373, and 394 each coordinate (2R)-2-phosphoglycerate. Lysine 343 acts as the Proton acceptor in catalysis.

The protein belongs to the enolase family. Requires Mg(2+) as cofactor.

The protein localises to the cytoplasm. The protein resides in the secreted. Its subcellular location is the cell surface. The enzyme catalyses (2R)-2-phosphoglycerate = phosphoenolpyruvate + H2O. It participates in carbohydrate degradation; glycolysis; pyruvate from D-glyceraldehyde 3-phosphate: step 4/5. Functionally, catalyzes the reversible conversion of 2-phosphoglycerate (2-PG) into phosphoenolpyruvate (PEP). It is essential for the degradation of carbohydrates via glycolysis. In Staphylococcus haemolyticus (strain JCSC1435), this protein is Enolase.